We begin with the raw amino-acid sequence, 396 residues long: MSKLNAYFGEYGGQFVPQILVPALDQLEQEFIKAQADESFKQEFKELLQEYAGRPTALTKTRNIVKNTRTKLYLKREDLLHGGAHKTNQVLGQALLAKRMGKKEIIAETGAGQHGVATALACALLDLKCRVYMGAKDVERQSPNVFRMKLMGAEVIPVHSGSATLKDACNEALRDWSANYSKAHYLLGTAAGPHPFPTIVREFQRMIGEETKQQMLAKEGRLPDAVIACVGGGSNAIGMFADFIDEKNVKLIGVEPAGKGIETGEHGAPLKHGKTGIFFGMKAPLMQNSDGQIEESYSISAGLDFPSVGPQHAHLLAIGRAKYASATDDEALDAFKLLCKKEGIIPALESSHALAHALKLAYEDPNKEQLLVVNLSGRGDKDIFTVHDILKEKGEI.

Position 86 is an N6-(pyridoxal phosphate)lysine (Lys-86).

The protein belongs to the TrpB family. Tetramer of two alpha and two beta chains. It depends on pyridoxal 5'-phosphate as a cofactor.

It carries out the reaction (1S,2R)-1-C-(indol-3-yl)glycerol 3-phosphate + L-serine = D-glyceraldehyde 3-phosphate + L-tryptophan + H2O. The protein operates within amino-acid biosynthesis; L-tryptophan biosynthesis; L-tryptophan from chorismate: step 5/5. The beta subunit is responsible for the synthesis of L-tryptophan from indole and L-serine. This chain is Tryptophan synthase beta chain, found in Francisella tularensis subsp. tularensis (strain FSC 198).